The primary structure comprises 704 residues: MTRLVDLDKVRNIGIMAHIDAGKTTTTERILYYTGRLHRMGEVHDGGATMDWMEQEKERGITITSAATTCFWIPKFGNYSGINHRINIIDTPGHVDFTVEVERSLRVLDGAVALFCAVGGVEPQSETVWRQANKYGVPRIAYVNKMDRTGANFFDTVKAIRERLGANPVPLQIPIGEGEIFAGFVDLIRMKGIIYNKDDGSTYNEVEIPHDLQNEARTWRINMLEAVSEVDDTLLEKYLNGEEITEQEVRSVLRKATLKVTIIPVLCGSSFKNKGVQFMLDAVVEYLASPVDVGAVEGHHPKTEESVSREPKDEEPFAGLAFKIATDPFVGKLTFFRVYSGVLKAGSYVLNTMTGKKERIGRILQMHSNKREDIDCVYAGDIAAAVGLKDVRTGDTICDESNPVVLEKMVFPEPVIEIAIEPKTKADNDKLGMSLAKLAEEDPTFKVKTDEETGQTLIAGMGELHLEILVDRLKREFKVEANVGKPQVAYRETIRKTVEFEGKFVRQSGGKGQFGLVVLKVEPLEEGKGYEFVDAIKGGVIPREYIPAVNAGVQQAMKNGVVAGFPMQDIKVTLLDGKYHEVDSSEMAFKIAGSIGFKGAAKKADPVLLEPIMKVEVVTPEEYLGDVMGDLSSRRGHIEGMGQRAGAQFVNSKVPLSAMFGYSTDLRSMSQGRANYSMEFECYREVPRSIAEAMQEKRVSRDLE.

Positions 8–291 (DKVRNIGIMA…AVVEYLASPV (284 aa)) constitute a tr-type G domain. Residues 17–24 (AHIDAGKT), 90–94 (DTPGH), and 144–147 (NKMD) contribute to the GTP site.

This sequence belongs to the TRAFAC class translation factor GTPase superfamily. Classic translation factor GTPase family. EF-G/EF-2 subfamily.

It is found in the cytoplasm. Catalyzes the GTP-dependent ribosomal translocation step during translation elongation. During this step, the ribosome changes from the pre-translocational (PRE) to the post-translocational (POST) state as the newly formed A-site-bound peptidyl-tRNA and P-site-bound deacylated tRNA move to the P and E sites, respectively. Catalyzes the coordinated movement of the two tRNA molecules, the mRNA and conformational changes in the ribosome. This is Elongation factor G from Chlorobium limicola (strain DSM 245 / NBRC 103803 / 6330).